Consider the following 298-residue polypeptide: Cyclin-dependent kinase 2 (298 aa).

Position 1 is an N-acetylmethionine (Met-1). One can recognise a Protein kinase domain in the interval 4–286; the sequence is FQKVEKIGEG…AKAALAHPFF (283 aa). N6-acetyllysine is present on Lys-6. 10–18 is a binding site for ATP; that stretch reads IGEGTYGVV. Thr-14 is subject to Phosphothreonine. Tyr-15 is subject to Phosphotyrosine; by WEE1. Tyr-19 carries the post-translational modification Phosphotyrosine. Residues Lys-33, 81 to 83, and Asp-86 each bind ATP; that span reads EFL. Catalysis depends on Asp-127, which acts as the Proton acceptor. Residues 129-132 and Asp-145 contribute to the ATP site; that span reads KPQN. Positions 132 and 145 each coordinate Mg(2+). The residue at position 160 (Thr-160) is a Phosphothreonine; by CAK and CCRK.

This sequence belongs to the protein kinase superfamily. CMGC Ser/Thr protein kinase family. CDC2/CDKX subfamily. Found in a complex with CABLES1, CCNA1 and CCNE1. Interacts with CABLES1. Interacts with UHRF2. Part of a complex consisting of UHRF2, CDK2 and CCNE1. Interacts with the Speedy/Ringo proteins SPDYA and SPDYC. Interaction with SPDYA promotes kinase activation via a conformation change that alleviates obstruction of the substrate-binding cleft by the T-loop. Found in a complex with both SPDYA and CDKN1B/KIP1. Binds to RB1. Binds to CDK7. Binding to CDKN1A (p21) leads to CDK2/cyclin E inactivation at the G1-S phase DNA damage checkpoint, thereby arresting cells at the G1-S transition during DNA repair. Associated with PTPN6 and beta-catenin/CTNNB1. Interacts with CACUL1. May interact with CEP63. Interacts with ANKRD17. Interacts with CEBPA (when phosphorylated). Forms a ternary complex with CCNA2 and CDKN1B; CDKN1B inhibits the kinase activity of CDK2 through conformational rearrangements. Interacts with cyclins A, B1, B3, D, or E. Interacts with CDK2AP2. Mg(2+) is required as a cofactor. Post-translationally, phosphorylated at Thr-160 by CDK7 in a CAK complex. Phosphorylation at Thr-160 promotes kinase activity, whereas phosphorylation at Tyr-15 by WEE1 reduces slightly kinase activity. Phosphorylated on Thr-14 and Tyr-15 during S and G2 phases before being dephosphorylated by CDC25A. Nitrosylated after treatment with nitric oxide (DETA-NO).

Its subcellular location is the cytoplasm. The protein resides in the cytoskeleton. It is found in the microtubule organizing center. It localises to the centrosome. The protein localises to the nucleus. Its subcellular location is the cajal body. The protein resides in the endosome. It carries out the reaction L-seryl-[protein] + ATP = O-phospho-L-seryl-[protein] + ADP + H(+). The enzyme catalyses L-threonyl-[protein] + ATP = O-phospho-L-threonyl-[protein] + ADP + H(+). With respect to regulation, phosphorylation at Thr-14 or Tyr-15 inactivates the enzyme, while phosphorylation at Thr-160 activates it. Stimulated by MYC. Inactivated by CDKN1A (p21). Functionally, serine/threonine-protein kinase involved in the control of the cell cycle; essential for meiosis, but dispensable for mitosis. Phosphorylates CABLES1, CTNNB1, CDK2AP2, ERCC6, NBN, USP37, p53/TP53, NPM1, CDK7, RB1, BRCA2, MYC, NPAT, EZH2. Triggers duplication of centrosomes and DNA. Acts at the G1-S transition to promote the E2F transcriptional program and the initiation of DNA synthesis, and modulates G2 progression; controls the timing of entry into mitosis/meiosis by controlling the subsequent activation of cyclin B/CDK1 by phosphorylation, and coordinates the activation of cyclin B/CDK1 at the centrosome and in the nucleus. Crucial role in orchestrating a fine balance between cellular proliferation, cell death, and DNA repair in embryonic stem cells (ESCs). Activity of CDK2 is maximal during S phase and G2; activated by interaction with cyclin E during the early stages of DNA synthesis to permit G1-S transition, and subsequently activated by cyclin A2 (cyclin A1 in germ cells) during the late stages of DNA replication to drive the transition from S phase to mitosis, the G2 phase. EZH2 phosphorylation promotes H3K27me3 maintenance and epigenetic gene silencing. Cyclin E/CDK2 prevents oxidative stress-mediated Ras-induced senescence by phosphorylating MYC. Involved in G1-S phase DNA damage checkpoint that prevents cells with damaged DNA from initiating mitosis; regulates homologous recombination-dependent repair by phosphorylating BRCA2, this phosphorylation is low in S phase when recombination is active, but increases as cells progress towards mitosis. In response to DNA damage, double-strand break repair by homologous recombination a reduction of CDK2-mediated BRCA2 phosphorylation. Involved in regulation of telomere repair by mediating phosphorylation of NBN. Phosphorylation of RB1 disturbs its interaction with E2F1. NPM1 phosphorylation by cyclin E/CDK2 promotes its dissociation from unduplicated centrosomes, thus initiating centrosome duplication. Cyclin E/CDK2-mediated phosphorylation of NPAT at G1-S transition and until prophase stimulates the NPAT-mediated activation of histone gene transcription during S phase. Required for vitamin D-mediated growth inhibition by being itself inactivated. Involved in the nitric oxide- (NO) mediated signaling in a nitrosylation/activation-dependent manner. USP37 is activated by phosphorylation and thus triggers G1-S transition. CTNNB1 phosphorylation regulates insulin internalization. Phosphorylates FOXP3 and negatively regulates its transcriptional activity and protein stability. Phosphorylates ERCC6 which is essential for its chromatin remodeling activity at DNA double-strand breaks. Acts as a regulator of the phosphatidylinositol 3-kinase/protein kinase B signal transduction by mediating phosphorylation of the C-terminus of protein kinase B (PKB/AKT1 and PKB/AKT2), promoting its activation. This is Cyclin-dependent kinase 2 (Cdk2) from Rattus norvegicus (Rat).